The sequence spans 189 residues: Dirigent protein 21 (189 aa).

Positions 1 to 19 (MASLYLLLLLPLFLALILA) are cleaved as a signal peptide. N72 and N173 each carry an N-linked (GlcNAc...) asparagine glycan.

This sequence belongs to the plant dirigent protein family. In terms of assembly, homodimer.

The protein resides in the secreted. In terms of biological role, dirigent proteins impart stereoselectivity on the phenoxy radical-coupling reaction, yielding optically active lignans from two molecules of coniferyl alcohol in the biosynthesis of lignans, flavonolignans, and alkaloids and thus plays a central role in plant secondary metabolism. This is Dirigent protein 21 (DIR21) from Arabidopsis thaliana (Mouse-ear cress).